We begin with the raw amino-acid sequence, 168 residues long: MPLLDSFKVDHTRMNAPAVRVAKTMRTPKGDNITVFDLRFCIPNKEILSPKGIHTLEHLFAGFMRDHLNSEQIEIIDISPMGCRTGFYMSLIGMPNEQQVANAWSASMQDILNVKNQAEIPELNEYQCGTYTEHSLEDAHNIARNILNRGVGINKNEDLLLDDNLLNS.

The Fe cation site is built by His-54, His-58, and Cys-128.

It belongs to the LuxS family. As to quaternary structure, homodimer. The cofactor is Fe cation.

The catalysed reaction is S-(5-deoxy-D-ribos-5-yl)-L-homocysteine = (S)-4,5-dihydroxypentane-2,3-dione + L-homocysteine. Functionally, involved in the synthesis of autoinducer 2 (AI-2) which is secreted by bacteria and is used to communicate both the cell density and the metabolic potential of the environment. The regulation of gene expression in response to changes in cell density is called quorum sensing. Catalyzes the transformation of S-ribosylhomocysteine (RHC) to homocysteine (HC) and 4,5-dihydroxy-2,3-pentadione (DPD). This chain is S-ribosylhomocysteine lyase, found in Histophilus somni (strain 2336) (Haemophilus somnus).